We begin with the raw amino-acid sequence, 282 residues long: 4-diphosphocytidyl-2-C-methyl-D-erythritol kinase (282 aa).

Residue K12 is part of the active site. Residue 95 to 105 (PMGGGIGGGSS) participates in ATP binding. Residue D137 is part of the active site.

It belongs to the GHMP kinase family. IspE subfamily.

The enzyme catalyses 4-CDP-2-C-methyl-D-erythritol + ATP = 4-CDP-2-C-methyl-D-erythritol 2-phosphate + ADP + H(+). It functions in the pathway isoprenoid biosynthesis; isopentenyl diphosphate biosynthesis via DXP pathway; isopentenyl diphosphate from 1-deoxy-D-xylulose 5-phosphate: step 3/6. Catalyzes the phosphorylation of the position 2 hydroxy group of 4-diphosphocytidyl-2C-methyl-D-erythritol. The protein is 4-diphosphocytidyl-2-C-methyl-D-erythritol kinase of Pseudomonas aeruginosa (strain UCBPP-PA14).